Consider the following 557-residue polypeptide: Urocanate hydratase (557 aa).

The interval 1–20 (MSNPRHNEREVRSPRGDELN) is disordered. NAD(+) contacts are provided by residues 52–53 (GG), Q130, 176–178 (GMG), E196, R201, 242–243 (NA), 263–267 (QTSAH), 273–274 (YL), and Y322. Residue C410 is part of the active site. NAD(+) is bound at residue G492.

Belongs to the urocanase family. Requires NAD(+) as cofactor.

Its subcellular location is the cytoplasm. The catalysed reaction is 4-imidazolone-5-propanoate = trans-urocanate + H2O. Its pathway is amino-acid degradation; L-histidine degradation into L-glutamate; N-formimidoyl-L-glutamate from L-histidine: step 2/3. Its function is as follows. Catalyzes the conversion of urocanate to 4-imidazolone-5-propionate. The chain is Urocanate hydratase from Brucella melitensis biotype 1 (strain ATCC 23456 / CCUG 17765 / NCTC 10094 / 16M).